We begin with the raw amino-acid sequence, 447 residues long: ATP-dependent protease ATPase subunit HslU (447 aa).

Residues I17, 59–64, D256, E321, and R393 contribute to the ATP site; that span reads GVGKTE.

Belongs to the ClpX chaperone family. HslU subfamily. As to quaternary structure, a double ring-shaped homohexamer of HslV is capped on each side by a ring-shaped HslU homohexamer. The assembly of the HslU/HslV complex is dependent on binding of ATP.

The protein resides in the cytoplasm. Functionally, ATPase subunit of a proteasome-like degradation complex; this subunit has chaperone activity. The binding of ATP and its subsequent hydrolysis by HslU are essential for unfolding of protein substrates subsequently hydrolyzed by HslV. HslU recognizes the N-terminal part of its protein substrates and unfolds these before they are guided to HslV for hydrolysis. This Pseudomonas putida (strain GB-1) protein is ATP-dependent protease ATPase subunit HslU.